The chain runs to 579 residues: Golvesin (579 aa).

The interval 1–75 (MTSVNEHSLL…NNNNNNNNNN (75 aa)) is required for targeting to the plasma membrane. The disordered stretch occupies residues 1 to 79 (MTSVNEHSLL…NNNNNNSNTG (79 aa)). The Lumenal portion of the chain corresponds to 1–94 (MTSVNEHSLL…KKKKWNFRKK (94 aa)). A compositionally biased stretch (low complexity) spans 11 to 77 (INNNENNDNN…NNNNNNNNSN (67 aa)). A helical; Signal-anchor for type III membrane protein membrane pass occupies residues 95–115 (ILPMIVILIITAIVVCLVVFS). The required for membrane targeting stretch occupies residues 95-118 (ILPMIVILIITAIVVCLVVFSLPF). Residues 116 to 578 (LPFDSSNTIY…SNDFVIAESP (463 aa)) are Cytoplasmic-facing. Positions 559 to 579 (WPSSKGIPGFSNDFVIAESPE) are required for transfer to endosomes and contractile vacuoles; the protein is trapped in the Golgi.

It localises to the contractile vacuole membrane. The protein localises to the endosome membrane. Its subcellular location is the golgi apparatus membrane. This chain is Golvesin (gol), found in Dictyostelium discoideum (Social amoeba).